Here is a 130-residue protein sequence, read N- to C-terminus: Cytochrome c oxidase subunit 13, mitochondrial (130 aa).

A mitochondrion-targeting transit peptide spans M1–Y31. Topologically, residues S32–T61 are mitochondrial matrix. The chain crosses the membrane as a helical span at residues Y62 to Y80. Over C81–E130 the chain is Mitochondrial intermembrane.

Belongs to the cytochrome c oxidase subunit 6A family. Component of the cytochrome c oxidase (complex IV, CIV), a multisubunit enzyme composed of a catalytic core of 3 subunits and several supernumerary subunits. The complex exists as a monomer or a dimer and forms supercomplexes (SCs) in the inner mitochondrial membrane with ubiquinol-cytochrome c oxidoreductase (cytochrome b-c1 complex, complex III, CIII).

The protein resides in the mitochondrion inner membrane. It participates in energy metabolism; oxidative phosphorylation. Component of the cytochrome c oxidase, the last enzyme in the mitochondrial electron transport chain which drives oxidative phosphorylation. The respiratory chain contains 3 multisubunit complexes succinate dehydrogenase (complex II, CII), ubiquinol-cytochrome c oxidoreductase (cytochrome b-c1 complex, complex III, CIII) and cytochrome c oxidase (complex IV, CIV), that cooperate to transfer electrons derived from NADH and succinate to molecular oxygen, creating an electrochemical gradient over the inner membrane that drives transmembrane transport and the ATP synthase. Cytochrome c oxidase is the component of the respiratory chain that catalyzes the reduction of oxygen to water. Electrons originating from reduced cytochrome c in the intermembrane space (IMS) are transferred via the dinuclear copper A center (CU(A)) of subunit 2 and heme A of subunit 1 to the active site in subunit 1, a binuclear center (BNC) formed by heme A3 and copper B (CU(B)). The BNC reduces molecular oxygen to 2 water molecules unsing 4 electrons from cytochrome c in the IMS and 4 protons from the mitochondrial matrix. The protein is Cytochrome c oxidase subunit 13, mitochondrial (cox13) of Schizosaccharomyces pombe (strain 972 / ATCC 24843) (Fission yeast).